Consider the following 521-residue polypeptide: Biotinidase (521 aa).

The signal sequence occupies residues 1 to 25; the sequence is MSGARTAHALVFLLGCSALALGVCS. In terms of domain architecture, CN hydrolase spans 50–329; sequence NPLELSSRQQ…QGLVGTENTT (280 aa). The Proton acceptor role is filled by E90. 2 N-linked (GlcNAc...) asparagine glycosylation sites follow: N128 and N181. K190 functions as the Proton donor in the catalytic mechanism. Catalysis depends on C223, which acts as the Nucleophile. N380 carries N-linked (GlcNAc...) asparagine glycosylation.

It belongs to the carbon-nitrogen hydrolase superfamily. BTD/VNN family.

Its subcellular location is the secreted. It is found in the extracellular space. The enzyme catalyses biocytin + H2O = biotin + L-lysine. The catalysed reaction is biotin amide + H2O = biotin + NH4(+). Catalytic release of biotin from biocytin, the product of biotin-dependent carboxylases degradation. This chain is Biotinidase, found in Rattus norvegicus (Rat).